We begin with the raw amino-acid sequence, 295 residues long: Protoheme IX farnesyltransferase (295 aa).

9 consecutive transmembrane segments (helical) span residues 9–29 (ITKPGIIFGNVLSVAGGFFLA), 36–56 (FGVFLAAVIGTSLVVASGCVF), 80–100 (LVSLKLALLYATILGVAGVAL), 108–128 (LAALFAVIGFVIYVGLYSLYL), 135–155 (GTLVGSLSGAMPPVIGYCAVT), 163–183 (LTLLVMFSLWQMPHSYAIAIF), 209–229 (IMLYILAFLVATLMLTVGGYA), 230–250 (GLNYLAVAAGMGMYWLYMAWK), and 265–285 (FVFSIFTITALSVMMSVDFQV).

It belongs to the UbiA prenyltransferase family. Protoheme IX farnesyltransferase subfamily.

It localises to the cell inner membrane. The enzyme catalyses heme b + (2E,6E)-farnesyl diphosphate + H2O = Fe(II)-heme o + diphosphate. The protein operates within porphyrin-containing compound metabolism; heme O biosynthesis; heme O from protoheme: step 1/1. In terms of biological role, converts heme B (protoheme IX) to heme O by substitution of the vinyl group on carbon 2 of heme B porphyrin ring with a hydroxyethyl farnesyl side group. This Pseudomonas savastanoi pv. phaseolicola (strain 1448A / Race 6) (Pseudomonas syringae pv. phaseolicola (strain 1448A / Race 6)) protein is Protoheme IX farnesyltransferase.